The following is a 448-amino-acid chain: Dual specificity mitogen-activated protein kinase kinase 5 (448 aa).

An interaction with MAPK7 region spans residues 18 to 25 (VIRIKIPN). A PB1 domain is found at 18 to 109 (VIRIKIPNSG…EPLQIFPRAC (92 aa)). An interaction with MAP3K2/MAP3K3 region spans residues 64–68 (DEDGD). Residues 116-144 (NIHGLKVNTRAGPSQHTSPVVSDSLPSNS) are disordered. Residues 117–131 (IHGLKVNTRAGPSQH) are interaction with MAPK7. Polar residues predominate over residues 126–144 (AGPSQHTSPVVSDSLPSNS). The region spanning 166-419 (IRYRDTLGHG…PEELMGHPFI (254 aa)) is the Protein kinase domain. Residues 172–180 (LGHGNGGTV) and lysine 195 each bind ATP. Aspartate 283 (proton acceptor) is an active-site residue. Serine 311 carries the phosphoserine modification. Threonine 315 is subject to Phosphothreonine.

This sequence belongs to the protein kinase superfamily. STE Ser/Thr protein kinase family. MAP kinase kinase subfamily. Interacts with PARD6A, MAP3K3 and MAPK7. Forms a complex with SQSTM1 and PRKCZ or PRKCI. The cofactor is Mg(2+). In terms of processing, activated by phosphorylation on Ser/Thr by MAP kinase kinase kinases.

It is found in the cytoplasm. The catalysed reaction is L-seryl-[protein] + ATP = O-phospho-L-seryl-[protein] + ADP + H(+). The enzyme catalyses L-threonyl-[protein] + ATP = O-phospho-L-threonyl-[protein] + ADP + H(+). It carries out the reaction L-tyrosyl-[protein] + ATP = O-phospho-L-tyrosyl-[protein] + ADP + H(+). Its function is as follows. Acts as a scaffold for the formation of a ternary MAP3K2/MAP3K3-MAP3K5-MAPK7 signaling complex. Activation of this pathway appears to play a critical role in protecting cells from stress-induced apoptosis, neuronal survival and cardiac development and angiogenesis. As part of the MAPK/ERK signaling pathway, acts as a negative regulator of apoptosis in cardiomyocytes via promotion of STUB1/CHIP-mediated ubiquitination and degradation of ICER-type isoforms of CREM. The chain is Dual specificity mitogen-activated protein kinase kinase 5 (Map2k5) from Mus musculus (Mouse).